The following is a 128-amino-acid chain: uncharacterized protein (128 aa).

As to expression, high expression in pituitary gland and weak in pancreas.

This is an uncharacterized protein from Homo sapiens (Human).